Consider the following 71-residue polypeptide: UPF0352 protein Swoo_2786 (71 aa).

This sequence belongs to the UPF0352 family.

In Shewanella woodyi (strain ATCC 51908 / MS32), this protein is UPF0352 protein Swoo_2786.